The primary structure comprises 272 residues: MEYNPPNTRERIVARRQRMRRNSTEPVVPGWRWRLREGLRSGRIVSGIVFVISCFALFYVLFSSRFRVQTVEVVGAEFLSPERIVAAVPLRGLPIWLVDEEQAVAPLLTSPFVEEARLTLSLPDRARIVIVERQPAIYWRTGGVDYLVDRQGYVIEAAATPPAEDELVIVDSSNLPVEPGMRLDTDALTLARELAFVLPNQIGLHPAQIGWDFGLGVFVRTAQDQMIVFGRSERLERKLTILAYLLADGTPFTYLDLRPVNPFYQYRPDGSS.

At 1–43 (MEYNPPNTRERIVARRQRMRRNSTEPVVPGWRWRLREGLRSGR) the chain is on the cytoplasmic side. The chain crosses the membrane as a helical span at residues 44–64 (IVSGIVFVISCFALFYVLFSS). The Extracellular portion of the chain corresponds to 65-272 (RFRVQTVEVV…FYQYRPDGSS (208 aa)). One can recognise a POTRA domain in the interval 66-133 (FRVQTVEVVG…DRARIVIVER (68 aa)).

Belongs to the FtsQ/DivIB family. FtsQ subfamily.

The protein resides in the cell membrane. In terms of biological role, essential cell division protein. This is Cell division protein FtsQ from Chloroflexus aurantiacus (strain ATCC 29366 / DSM 635 / J-10-fl).